Here is a 117-residue protein sequence, read N- to C-terminus: Immunoglobulin kappa variable 1D-12 (117 aa).

Residues 1-22 form the signal peptide; it reads MDMMVPAQLLGLLLLWFPGSRC. Residues 23 to 45 form a framework-1 region; it reads DIQMTQSPSSVSASVGDRVTITC. The Ig-like domain maps to 24-117; that stretch reads IQMTQSPSSV…YYCQQANSFP (94 aa). A disulfide bridge links Cys-45 with Cys-110. The segment at 46 to 56 is complementarity-determining-1; it reads RASQGISSWLA. Residues 57–71 form a framework-2 region; sequence WYQQKPGKAPKLLIY. The segment at 72 to 78 is complementarity-determining-2; the sequence is AASSLQS. The framework-3 stretch occupies residues 79–110; the sequence is GVPSRFSGSGSGTDFTLTISSLQPEDFATYYC. Positions 111–117 are complementarity-determining-3; that stretch reads QQANSFP.

In terms of assembly, immunoglobulins are composed of two identical heavy chains and two identical light chains; disulfide-linked.

Its subcellular location is the secreted. The protein localises to the cell membrane. Functionally, v region of the variable domain of immunoglobulin light chains that participates in the antigen recognition. Immunoglobulins, also known as antibodies, are membrane-bound or secreted glycoproteins produced by B lymphocytes. In the recognition phase of humoral immunity, the membrane-bound immunoglobulins serve as receptors which, upon binding of a specific antigen, trigger the clonal expansion and differentiation of B lymphocytes into immunoglobulins-secreting plasma cells. Secreted immunoglobulins mediate the effector phase of humoral immunity, which results in the elimination of bound antigens. The antigen binding site is formed by the variable domain of one heavy chain, together with that of its associated light chain. Thus, each immunoglobulin has two antigen binding sites with remarkable affinity for a particular antigen. The variable domains are assembled by a process called V-(D)-J rearrangement and can then be subjected to somatic hypermutations which, after exposure to antigen and selection, allow affinity maturation for a particular antigen. The polypeptide is Immunoglobulin kappa variable 1D-12 (Homo sapiens (Human)).